The primary structure comprises 310 residues: p-hydroxybenzoic acid efflux pump subunit AaeA (310 aa).

A helical transmembrane segment spans residues 12 to 32 (AITVVLVILAFIAIFNAWVYY).

This sequence belongs to the membrane fusion protein (MFP) (TC 8.A.1) family.

Its subcellular location is the cell inner membrane. Forms an efflux pump with AaeB. The chain is p-hydroxybenzoic acid efflux pump subunit AaeA from Escherichia coli O127:H6 (strain E2348/69 / EPEC).